Reading from the N-terminus, the 108-residue chain is Nucleoid-associated protein BAV0915 (108 aa).

The protein belongs to the YbaB/EbfC family. As to quaternary structure, homodimer.

It localises to the cytoplasm. The protein resides in the nucleoid. In terms of biological role, binds to DNA and alters its conformation. May be involved in regulation of gene expression, nucleoid organization and DNA protection. The protein is Nucleoid-associated protein BAV0915 of Bordetella avium (strain 197N).